The following is a 112-amino-acid chain: cAMP-regulated phosphoprotein 19 (112 aa).

A compositionally biased stretch (low complexity) spans 1–11 (MSAESPEPASA). The interval 1 to 49 (MSAESPEPASAEEQKEMEDKVLSPEKAEEAKLKARYPHLGQKPGGSDFL) is disordered. Residues 12–32 (EEQKEMEDKVLSPEKAEEAKL) show a composition bias toward basic and acidic residues. Serine 62 and serine 104 each carry phosphoserine; by GWL. A disordered region spans residues 72-112 (MKNKQLPTAAPDKTEVTGDHIPTPQDLPQRKPSLVASKLAG). A Phosphoserine; by PKA modification is found at serine 104.

This sequence belongs to the endosulfine family. Interacts (when phosphorylated at Ser-62) with PPP2R2D. In terms of processing, phosphorylation at Ser-62 by MASTL/GWL during mitosis is essential for interaction with PPP2R2D (PR55-delta) and subsequent inactivation of PP2A.

Its subcellular location is the cytoplasm. In terms of biological role, protein phosphatase inhibitor that specifically inhibits protein phosphatase 2A (PP2A) during mitosis. Inhibition of PP2A is enhanced when ARPP19 is phosphorylated. When phosphorylated at Ser-62 during mitosis, specifically interacts with PPP2R2D (PR55-delta) and inhibits its activity, leading to inactivation of PP2A, an essential condition to keep cyclin-B1-CDK1 activity high during M phase. This chain is cAMP-regulated phosphoprotein 19 (ARPP19), found in Taeniopygia guttata (Zebra finch).